The following is a 482-amino-acid chain: tRNA sulfurtransferase (482 aa).

In terms of domain architecture, THUMP spans 61 to 165; it reads LTIRDALTRI…DDRLLLIKGR (105 aa). ATP is bound by residues 183–184, Lys265, Gly287, and Gln296; that span reads LI. The cysteines at positions 344 and 456 are disulfide-linked. Residues 404–482 enclose the Rhodanese domain; the sequence is FGPNDVILDI…GFNNVKVYRP (79 aa). Cys456 serves as the catalytic Cysteine persulfide intermediate.

The protein belongs to the ThiI family.

Its subcellular location is the cytoplasm. The catalysed reaction is [ThiI sulfur-carrier protein]-S-sulfanyl-L-cysteine + a uridine in tRNA + 2 reduced [2Fe-2S]-[ferredoxin] + ATP + H(+) = [ThiI sulfur-carrier protein]-L-cysteine + a 4-thiouridine in tRNA + 2 oxidized [2Fe-2S]-[ferredoxin] + AMP + diphosphate. It carries out the reaction [ThiS sulfur-carrier protein]-C-terminal Gly-Gly-AMP + S-sulfanyl-L-cysteinyl-[cysteine desulfurase] + AH2 = [ThiS sulfur-carrier protein]-C-terminal-Gly-aminoethanethioate + L-cysteinyl-[cysteine desulfurase] + A + AMP + 2 H(+). It participates in cofactor biosynthesis; thiamine diphosphate biosynthesis. Its function is as follows. Catalyzes the ATP-dependent transfer of a sulfur to tRNA to produce 4-thiouridine in position 8 of tRNAs, which functions as a near-UV photosensor. Also catalyzes the transfer of sulfur to the sulfur carrier protein ThiS, forming ThiS-thiocarboxylate. This is a step in the synthesis of thiazole, in the thiamine biosynthesis pathway. The sulfur is donated as persulfide by IscS. The sequence is that of tRNA sulfurtransferase from Shigella flexneri.